The primary structure comprises 53 residues: Membrane antigen containing repeating peptides (53 aa).

6 consecutive repeat copies span residues Glu-1 to Ala-10, Glu-11 to Ala-20, Glu-21 to Ala-30, Glu-31 to Ala-40, Glu-41 to Ala-50, and Glu-51 to Glu-53. The 6 X 10 AA tandem repeats stretch occupies residues Glu-1–Glu-53. The segment at Glu-1 to Glu-53 is disordered.

It localises to the membrane. This is Membrane antigen containing repeating peptides from Leishmania major.